The chain runs to 591 residues: Protein NRT1/ PTR FAMILY 4.3 (591 aa).

Residues 1–10 (MAEINKQSNK) are compositionally biased toward polar residues. Positions 1–38 (MAEINKQSNKWEQEEVSNENNWELAEEESVDWRGRPSN) are disordered. Helical transmembrane passes span 47–67 (AALFVLGLQAFEIMGIAAVGN), 85–105 (ANIVTNFVGTIFIFALLGGYL), 109–129 (FLGSFWTIIIFGFVELSGFIL), 157–177 (GFKAMIFFMALYLVALGSGCV), 204–224 (FNAAYFAFSMGELIALTLLVW), 233–253 (IGFGVSAAAMTMGIISLVSGT), 347–367 (LISLVPIFASTIVFNTILAQL), 395–415 (AIPYIMLIFLVPLYDSFLVPF), 429–449 (LTRIGIGLFLSTFSMVSAAML), 463–483 (ILSIFWITPQFLIFGISEMFT), 502–522 (FLMALTYCSYSFGFYFSSVLV), and 551–571 (LFYWLLAVLSLLNFLSYLFWS).

It belongs to the major facilitator superfamily. Proton-dependent oligopeptide transporter (POT/PTR) (TC 2.A.17) family. Expressed in flowers. Detected in roots and siliques.

It localises to the membrane. The chain is Protein NRT1/ PTR FAMILY 4.3 (NPF4.3) from Arabidopsis thaliana (Mouse-ear cress).